Reading from the N-terminus, the 222-residue chain is Octanoyltransferase (222 aa).

The region spanning 34–214 (GEAPSTVLLL…EFRKHEEALV (181 aa)) is the BPL/LPL catalytic domain. Residues 72–79 (RGGKLTWH), 144–146 (AIG), and 157–159 (GVA) each bind substrate. The active-site Acyl-thioester intermediate is Cys175.

Belongs to the LipB family.

The protein localises to the cytoplasm. The catalysed reaction is octanoyl-[ACP] + L-lysyl-[protein] = N(6)-octanoyl-L-lysyl-[protein] + holo-[ACP] + H(+). The protein operates within protein modification; protein lipoylation via endogenous pathway; protein N(6)-(lipoyl)lysine from octanoyl-[acyl-carrier-protein]: step 1/2. Its function is as follows. Catalyzes the transfer of endogenously produced octanoic acid from octanoyl-acyl-carrier-protein onto the lipoyl domains of lipoate-dependent enzymes. Lipoyl-ACP can also act as a substrate although octanoyl-ACP is likely to be the physiological substrate. In Pseudarthrobacter chlorophenolicus (strain ATCC 700700 / DSM 12829 / CIP 107037 / JCM 12360 / KCTC 9906 / NCIMB 13794 / A6) (Arthrobacter chlorophenolicus), this protein is Octanoyltransferase.